Consider the following 111-residue polypeptide: Ig kappa chain V-III region PC 7175 (111 aa).

A framework-1 region spans residues 1–23 (DIVLTQSPASLAVSLGQRATISC). The cysteines at positions 23 and 92 are disulfide-linked. The complementarity-determining-1 stretch occupies residues 24–38 (RASKSVSTSGYSYMH). Residues 39–53 (WYQQKPGQPPKLLIY) are framework-2. A complementarity-determining-2 region spans residues 54 to 60 (LASNLES). A framework-3 region spans residues 61 to 92 (GVPARFSGSGSGTDFTLNIHPVEEEDAATYYC). A complementarity-determining-3 region spans residues 93–101 (QHSRELPLT). The framework-4 stretch occupies residues 102–111 (FGAGTKLELK).

The protein is Ig kappa chain V-III region PC 7175 of Mus musculus (Mouse).